The primary structure comprises 89 residues: Small ribosomal subunit protein uS15 (89 aa).

This sequence belongs to the universal ribosomal protein uS15 family. In terms of assembly, part of the 30S ribosomal subunit. Forms a bridge to the 50S subunit in the 70S ribosome, contacting the 23S rRNA.

Functionally, one of the primary rRNA binding proteins, it binds directly to 16S rRNA where it helps nucleate assembly of the platform of the 30S subunit by binding and bridging several RNA helices of the 16S rRNA. Its function is as follows. Forms an intersubunit bridge (bridge B4) with the 23S rRNA of the 50S subunit in the ribosome. This is Small ribosomal subunit protein uS15 from Mycobacteroides abscessus (strain ATCC 19977 / DSM 44196 / CCUG 20993 / CIP 104536 / JCM 13569 / NCTC 13031 / TMC 1543 / L948) (Mycobacterium abscessus).